The following is a 477-amino-acid chain: 3-sulfolactaldehyde dehydrogenase (477 aa).

232–233 lines the NAD(+) pocket; that stretch reads GS. The Proton acceptor role is filled by Glu252. Leu253 is an NAD(+) binding site. Cys286 serves as the catalytic Nucleophile. Residue Glu380 coordinates NAD(+).

Belongs to the aldehyde dehydrogenase family.

The catalysed reaction is (2S)-3-sulfolactaldehyde + NAD(+) + H2O = (2S)-3-sulfolactate + NADH + 2 H(+). Functionally, part of the sulfo-TAL (or sulfo-SFT) pathway, a D-sulfoquinovose degradation pathway that produces sulfolactate (SL). Catalyzes the oxidation of 3-sulfolactaldehyde (SLA) to sulfolactate (SL). This chain is 3-sulfolactaldehyde dehydrogenase, found in Priestia aryabhattai (Bacillus aryabhattai).